A 674-amino-acid chain; its full sequence is Carbon monoxide dehydrogenase/acetyl-CoA synthase subunit beta (674 aa).

The segment at 1–25 (MPRFRDLSHNCRPSEAPRVMEPKNR) is disordered. [4Fe-4S] cluster is bound by residues cysteine 59, cysteine 67, cysteine 68, cysteine 71, cysteine 76, and cysteine 90. [Ni-4Fe-4S] cluster contacts are provided by histidine 283, cysteine 317, cysteine 355, cysteine 470, cysteine 500, and cysteine 550.

Tetramer of two alpha and two beta chains. [Ni-Fe-S] cluster serves as cofactor. It depends on [4Fe-4S] cluster as a cofactor.

It carries out the reaction CO + 2 oxidized [2Fe-2S]-[ferredoxin] + H2O = 2 reduced [2Fe-2S]-[ferredoxin] + CO2 + 2 H(+). In terms of biological role, the beta subunit (this protein) generates CO from CO(2), while the alpha subunit combines the CO with CoA and a methyl group to form acetyl-CoA. The methyl group, which is incorporated into acetyl-CoA, is transferred to the alpha subunit by a corrinoid iron-sulfur protein. The protein is Carbon monoxide dehydrogenase/acetyl-CoA synthase subunit beta of Moorella thermoacetica (Clostridium thermoaceticum).